The chain runs to 525 residues: uncharacterized protein (525 aa).

The next 6 membrane-spanning stretches (helical) occupy residues 7 to 29 (FLAT…LGQI), 34 to 51 (LRFG…VGAL), 64 to 82 (GLGV…GSTF), 92 to 114 (LMLA…GRLF), 121 to 143 (VAGL…ATHG), and 148 to 170 (LVGY…AIIA). 2 RCK C-terminal domains span residues 178 to 257 (KDNT…LGHV) and 259 to 341 (ERTL…LFGD). 5 consecutive transmembrane segments (helical) span residues 351–370 (ALSL…LMVA), 374–396 (GLQF…GSIH), 416–438 (LGLM…SQAV), 443–465 (LAVI…AAAW), and 502–524 (SAYG…VIVL).

This sequence belongs to the AAE transporter (TC 2.A.81) family.

Its subcellular location is the cell membrane. This is an uncharacterized protein from Cutibacterium acnes (strain DSM 16379 / KPA171202) (Propionibacterium acnes).